Here is an 84-residue protein sequence, read N- to C-terminus: MSNEKASTKAPKFAYPSKKKYCIFCSEKIDYIDYKNVERLKRFMTEKGKIIPRRISGNCARHQRQLSTAIKRARYMALLPYVVK.

It belongs to the bacterial ribosomal protein bS18 family. Part of the 30S ribosomal subunit. Forms a tight heterodimer with protein bS6.

Binds as a heterodimer with protein bS6 to the central domain of the 16S rRNA, where it helps stabilize the platform of the 30S subunit. This chain is Small ribosomal subunit protein bS18, found in Dictyoglomus turgidum (strain DSM 6724 / Z-1310).